We begin with the raw amino-acid sequence, 97 residues long: MNITLFCSVFILISLAGLSVSDDVPGNYPMSLYGNKYSCGVLGENEYCRKICKSHGVSYGYCFNSRCWCEYLEDKDVDFWAAHKNHCKNDKLYPPKK.

Residues 1–21 (MNITLFCSVFILISLAGLSVS) form the signal peptide. One can recognise an LCN-type CS-alpha/beta domain in the interval 25 to 88 (PGNYPMSLYG…FWAAHKNHCK (64 aa)). Disulfide bonds link C39/C62, C48/C67, and C52/C69.

The protein belongs to the long (3 C-C) scorpion toxin superfamily. In terms of assembly, monomer (edited version) and heterodimer (non-edited version) of this alpha chain and a beta chain (AC D9U2A2). Expressed by the venom gland.

The protein resides in the secreted. The heterodimer non-edited LVP1 induces lipolysis in rat adipocytes. Induction of lipolysis by LVP1 appears to be mediated through the beta-2 adrenergic receptor pathway (ADRB2). In terms of biological role, the edited BmKBTx-like, similar to beta-toxins, may modulate voltage-gated sodium channels (Nav) and may block voltage-gated potassium channels (Kv). The chain is Lipolysis-activating peptide 1-alpha chain from Lychas mucronatus (Chinese swimming scorpion).